A 250-amino-acid polypeptide reads, in one-letter code: Heme oxygenase 2 (250 aa).

Position 16 (His16) interacts with heme b. The interval 228 to 250 (QDRPGSTEARSTAGHPITLMVGE) is disordered.

Belongs to the heme oxygenase family. In terms of assembly, homodimer.

The enzyme catalyses heme b + 3 reduced [NADPH--hemoprotein reductase] + 3 O2 = biliverdin IXalpha + CO + Fe(2+) + 3 oxidized [NADPH--hemoprotein reductase] + 3 H2O + H(+). In terms of biological role, catalyzes the opening of the heme ring with the release of iron. Key enzyme in the synthesis of the chromophoric part of the photosynthetic antennae. The protein is Heme oxygenase 2 (pbsA2) of Synechocystis sp. (strain ATCC 27184 / PCC 6803 / Kazusa).